Reading from the N-terminus, the 862-residue chain is Phosphatidic acid phosphohydrolase 1 (862 aa).

The interval 19–104 (NPATLSGAID…VPDELLVSPV (86 aa)) is N-LIP. 2 disordered regions span residues 104 to 183 (VMSA…SVEE) and 300 to 341 (GSTL…AGSG). Over residues 105-117 (MSATSSPPQSPET) the composition is skewed to polar residues. Residues serine 110 and serine 114 each carry the phosphoserine modification. Basic and acidic residues predominate over residues 132–143 (NENKKKEKKVLE). Composition is skewed to low complexity over residues 161 to 179 (SETT…TPPD) and 300 to 313 (GSTL…PSGS). The residue at position 168 (serine 168) is a Phosphoserine. A DXDXT motif motif is present at residues 398 to 402 (DIDGT). Lysine 496 carries the N6-acetyllysine modification. Serine 511 carries the phosphoserine modification. Serine 602 carries the phosphoserine; by CDC28 modification. A disordered region spans residues 648–732 (SDISNDDSDN…TPNKSTMSKG (85 aa)). The span at 651 to 663 (SNDDSDNIDEDTD) shows a compositional bias: acidic residues. 2 stretches are compositionally biased toward polar residues: residues 664 to 679 (VSQQ…NSVK) and 687 to 699 (PQRN…NNNE). Over residues 710–730 (ASDLVSSHSSSGSTPNKSTMS) the composition is skewed to low complexity. Threonine 723 bears the Phosphothreonine; by CDC28 mark. Serine 744 carries the phosphoserine; by CDC28 modification. Serine 748, serine 773, and serine 774 each carry phosphoserine. The tract at residues 757 to 780 (MDDEDSNYNRTKSRRASSAAATSI) is disordered. Lysine 801 bears the N6-acetyllysine mark. Positions 807-862 (DVHSLGNSDTESRREQSVNETGRNQLPHNSMDDKDLDSRVSDEFDDDEFDEDEFED) are disordered. Phosphoserine is present on residues serine 810 and serine 814. Threonine 816 is subject to Phosphothreonine. Residues 824 to 834 (VNETGRNQLPH) are compositionally biased toward polar residues. The span at 836–848 (SMDDKDLDSRVSD) shows a compositional bias: basic and acidic residues. Residues serine 844 and serine 847 each carry the phosphoserine modification. Residues 849-862 (EFDDDEFDEDEFED) are compositionally biased toward acidic residues.

It belongs to the lipin family. The cofactor is Mg(2+). In terms of processing, acetylation at Lys-496 and Lys-801 by ESA1 promotes synthesis of diacylglycerol. Phosphorylated by CDC28 at the onset of mitosis, and dephosphorylated by the NEM1-SPO7 complex. Phosphorylation regulates recruitment on promoters of lipid biosynthetic enzymes.

It localises to the cytoplasm. The protein localises to the nucleus membrane. The protein resides in the endoplasmic reticulum membrane. The catalysed reaction is a 1,2-diacyl-sn-glycero-3-phosphate + H2O = a 1,2-diacyl-sn-glycerol + phosphate. Phenylglyoxal and propranolol inhibit activity in dose-dependent manners with IC(50) values of 1.3 mM and 0.2 mM, respectively. Sertraline inhibits activity in a dose-dependent manner with an IC(50) value of 85 uM; the inhibitory effects of sertraline and propranolol are additive. Functionally, mg(2+)-dependent phosphatidate (PA) phosphatase which catalyzes the dephosphorylation of PA to yield diacylglycerol. Required for de novo lipid synthesis and formation of lipid droplets. Controls transcription of phospholipid biosynthetic genes and nuclear structure by regulating the amount of membrane present at the nuclear envelope. Involved in plasmid maintenance, in respiration and in cell proliferation. This Saccharomyces cerevisiae (strain ATCC 204508 / S288c) (Baker's yeast) protein is Phosphatidic acid phosphohydrolase 1 (PAH1).